The chain runs to 172 residues: Shikimate kinase (172 aa).

Residue 14–19 (GAGKST) participates in ATP binding. Position 18 (Ser18) interacts with Mg(2+). Positions 36, 60, and 82 each coordinate substrate. Arg120 contacts ATP. Residue Arg140 participates in substrate binding.

Belongs to the shikimate kinase family. In terms of assembly, monomer. Mg(2+) is required as a cofactor.

The protein resides in the cytoplasm. It catalyses the reaction shikimate + ATP = 3-phosphoshikimate + ADP + H(+). Its pathway is metabolic intermediate biosynthesis; chorismate biosynthesis; chorismate from D-erythrose 4-phosphate and phosphoenolpyruvate: step 5/7. Catalyzes the specific phosphorylation of the 3-hydroxyl group of shikimic acid using ATP as a cosubstrate. In Tolumonas auensis (strain DSM 9187 / NBRC 110442 / TA 4), this protein is Shikimate kinase.